We begin with the raw amino-acid sequence, 641 residues long: Fibrinogen alpha-2 chain (641 aa).

The first 23 residues, 1 to 23 (MTLRGVSMVLTWCLLVSKAWSSG), serve as a signal peptide directing secretion. Residues 107 to 226 (SVSDVSNQVV…IVHESFSVER (120 aa)) are a coiled coil. Residues 228–327 (DARSLHPYSG…QKTEELSFKK (100 aa)) are disordered. Residue Asn271 is glycosylated (N-linked (GlcNAc...) asparagine). The segment covering 279 to 289 (VDERSKVEKDV) has biased composition (basic and acidic residues). Positions 293 to 317 (STSSVSSSSSSSSSSSSTSSTISST) are enriched in low complexity. The region spanning 395–636 (RTNLSEYIDC…RTAVRFRRVQ (242 aa)) is the Fibrinogen C-terminal domain. N-linked (GlcNAc...) asparagine glycosylation occurs at Asn397. Cysteines 404 and 435 form a disulfide. A glycan (N-linked (GlcNAc...) asparagine) is linked at Asn458. A disulfide bridge links Cys571 with Cys584.

As to quaternary structure, heterohexamer; disulfide linked. Contains 2 sets of 3 non-identical chains (alpha, beta and gamma). The 2 heterotrimers are in head to head conformation with the N-termini in a small central domain. Conversion of fibrinogen to fibrin is triggered by thrombin, which cleaves fibrinopeptides A and B from alpha and beta chains, and thus exposes the N-terminal polymerization sites responsible for the formation of the soft clot. The soft clot is converted into the hard clot by factor XIIIA which catalyzes the epsilon-(gamma-glutamyl)lysine cross-linking between gamma chains (stronger) and between alpha chains (weaker) of different monomers. Post-translationally, forms F13A-mediated cross-links between a glutamine and the epsilon-amino group of a lysine residue, forming fibronectin-fibrinogen heteropolymers.

It localises to the secreted. Fibrinogen has a double function: yielding monomers that polymerize into fibrin and acting as a cofactor in platelet aggregation. In Petromyzon marinus (Sea lamprey), this protein is Fibrinogen alpha-2 chain.